The chain runs to 181 residues: Thymidine kinase (181 aa).

Residue 13 to 20 (GPMFSGKS) coordinates ATP. The active-site Proton acceptor is Glu-85. Substrate is bound at residue Phe-115. Residues Cys-140 and Cys-143 each coordinate Zn(2+). 159–163 (IEIIG) is a substrate binding site. Residues Cys-172 and Cys-175 each contribute to the Zn(2+) site.

The protein belongs to the thymidine kinase family.

The enzyme catalyses thymidine + ATP = dTMP + ADP + H(+). The polypeptide is Thymidine kinase (TK) (Yaba monkey tumor virus (strain VR587) (YMTV)).